We begin with the raw amino-acid sequence, 238 residues long: MGRKWANIVAKKTAKDGATSKVYAKFGVEIYAAAKQGEPDPESNSALKFVIERAKQAQVPKHVIDKAIDKAKGGGDETFVQGRYEGFGPNGSMVIAETLTSNVNRTIANIRTIFNKKGGNIGAAGAVSYMFDNTGVIVFKGTDPDHIFEILLDAEVDVRDVTEEEGNIVIYTEATDLHKGIAALKAAGISEFSTTELEMIAQSEVELSPEDLEIFEGLVDALEDDDDVQKVYHNVANL.

The protein belongs to the TACO1 family. YeeN subfamily.

The protein localises to the cytoplasm. The protein is Probable transcriptional regulatory protein YeeN of Salmonella typhimurium (strain LT2 / SGSC1412 / ATCC 700720).